The sequence spans 269 residues: uncharacterized protein (269 aa).

Residues 3-66 (VDQAAIDEIL…QNLQNLAEGA (64 aa)) adopt a coiled-coil conformation. A disordered region spans residues 83–142 (AQIPEPPKPEPEVEQPETETGPEPEPEAEPELKEVKEDEPPEEDVVRELDESKSAEPIPE). The span at 94–111 (EVEQPETETGPEPEPEAE) shows a compositional bias: acidic residues. The segment covering 112-136 (PELKEVKEDEPPEEDVVRELDESKS) has biased composition (basic and acidic residues).

This is an uncharacterized protein from Archaeoglobus fulgidus (strain ATCC 49558 / DSM 4304 / JCM 9628 / NBRC 100126 / VC-16).